Consider the following 313-residue polypeptide: PDZ domain-containing protein GIPC2 (313 aa).

The segment covering 14–27 has biased composition (basic and acidic residues); it reads KETSRLVEGEHTDA. Residues 14 to 34 form a disordered region; it reads KETSRLVEGEHTDAAVRSLPS. The PDZ domain maps to 117–197; sequence EVNVYKSEDS…EELFTLTLIE (81 aa).

This sequence belongs to the GIPC family. Probably interacts with SEMA5A.

It is found in the cytoplasm. The polypeptide is PDZ domain-containing protein GIPC2 (GIPC2) (Bos taurus (Bovine)).